The chain runs to 427 residues: Flotillin-1 (427 aa).

A phosphoserine mark is found at Ser19, Ser163, and Ser385. Position 387 is a phosphothreonine (Thr387).

It belongs to the band 7/mec-2 family. Flotillin subfamily. As to quaternary structure, heterooligomeric complex of flotillin-1 and flotillin-2 and caveolin-1 and caveolin-2. Interacts with ECPAS.

It is found in the cell membrane. Its subcellular location is the endosome. The protein localises to the membrane. It localises to the caveola. The protein resides in the melanosome. It is found in the membrane raft. May act as a scaffolding protein within caveolar membranes, functionally participating in formation of caveolae or caveolae-like vesicles. This chain is Flotillin-1 (FLOT1), found in Pongo abelii (Sumatran orangutan).